The primary structure comprises 164 residues: HTH-type transcriptional regulator IscR (164 aa).

The 130-residue stretch at 2 to 131 folds into the HTH rrf2-type domain; that stretch reads RLTSKGRYAV…NNITLGELVN (130 aa). Residues 28-51 constitute a DNA-binding region (H-T-H motif); it reads LADISERQGISLSYLEQLFSRLRK. [2Fe-2S] cluster contacts are provided by cysteine 92, cysteine 98, and cysteine 104.

Requires [2Fe-2S] cluster as cofactor.

In terms of biological role, regulates the transcription of several operons and genes involved in the biogenesis of Fe-S clusters and Fe-S-containing proteins. The protein is HTH-type transcriptional regulator IscR of Salmonella choleraesuis (strain SC-B67).